The primary structure comprises 307 residues: Transcription initiation factor IIB (307 aa).

Tandem repeats lie at residues 123-206 (NELE…LREL) and 217-298 (DYVT…ELTQ).

It belongs to the TFIIB family.

Stabilizes TBP binding to an archaeal box-A promoter. Also responsible for recruiting RNA polymerase II to the pre-initiation complex (DNA-TBP-TFIIB). The chain is Transcription initiation factor IIB from Sulfolobus acidocaldarius (strain ATCC 33909 / DSM 639 / JCM 8929 / NBRC 15157 / NCIMB 11770).